A 726-amino-acid polypeptide reads, in one-letter code: Cyclic nucleotide-gated ion channel 2 (726 aa).

Residues 1-127 (MPSHPNFIFR…SKRVQRWNRA (127 aa)) lie on the Cytoplasmic side of the membrane. The disordered stretch occupies residues 26 to 46 (IDENSNLQINGGDSSSSGSDE). A compositionally biased stretch (low complexity) spans 36 to 45 (GGDSSSSGSD). Residues 128 to 148 (LLLARGMALAVDPLFFYALSI) traverse the membrane as a helical segment. Residues 149 to 162 (GRTTGPACLYMDGA) are Extracellular-facing. A helical membrane pass occupies residues 163–183 (FAAVVTVLRTCLDAVHLWHVW). The Cytoplasmic segment spans residues 184-219 (LQFRLAYVSRESLVVGCGKLVWDPRAIASHYARSLT). A helical membrane pass occupies residues 220 to 240 (GFWFDVIVILPVPQAVFWLVV). Residues 241–254 (PKLIREEKVKLIMT) are Extracellular-facing. Residues 255–275 (ILLLIFLFQFLPKIYHCICLM) form a helical membrane-spanning segment. Topologically, residues 276–282 (RRMQKVT) are cytoplasmic. A helical transmembrane segment spans residues 283 to 303 (GYIFGTIWWGFALNLIAYFIA). At 304–424 (SHVAGGCWYV…ANDLEPTSNW (121 aa)) the chain is on the extracellular side. Residues 425–445 (LEVIFSIVMVLSGLLLFTLLI) traverse the membrane as a helical segment. Residues 446–726 (GNIQVFLHAV…MSIRPHDHLE (281 aa)) lie on the Cytoplasmic side of the membrane. A nucleoside 3',5'-cyclic phosphate contacts are provided by residues 531–661 (LFRG…ARYY) and D600. The segment at 645–661 (FRYKFANERLKRTARYY) is calmodulin-binding. An IQ domain is found at 666–695 (RTWAAVNIQMAWRRRRKRTRGENIGGSMSP).

It belongs to the cyclic nucleotide-gated cation channel (TC 1.A.1.5) family. As to quaternary structure, homotetramer or heterotetramer (Potential). Binds calmodulin-1/4 with a higher affinity than calmodulin-2/3/5. In terms of tissue distribution, expressed in the whole plant but only weakly in roots. Strongly expressed in the expanded cotyledons of 14-day-old seedlings and detected later in leaves after the transition to flowering. Also detected in flowers during organ senescence and in the dehiscence zone of siliques.

The protein resides in the cell membrane. In terms of biological role, acts as a cyclic nucleotide-gated ion channel. Permeable to potassium and calcium in a cyclic nucleotide-dependent fashion (cAMP or cGMP). Could also transport lithium, cesium and rubium and displays a strong selectivity against sodium. Seems to directly participate in pathogen-induced calcium influx. May function in homeostasis, re-establishing ionic balance after defense action and/or other stimuli. Could mediate the initiation of the developmentally regulated cell death programs. In Arabidopsis thaliana (Mouse-ear cress), this protein is Cyclic nucleotide-gated ion channel 2 (CNGC2).